The chain runs to 545 residues: E3 ubiquitin-protein ligase ipaH9.8 (545 aa).

Positions 1–242 are interaction with target proteins; sequence MLPINNNFSL…YHGPRIYFSM (242 aa). 8 LRR repeats span residues 57–77, 78–99, 100–117, 118–139, 140–157, 158–179, 182–203, and 205–228; these read NSDELRLDRLNLSSLPDNLPA, QITLLNVSYNQLTNLPELPVTL, KKLYSASNKLSELPVLPP, ALESLQVQHNELENLPALPDSL, LTMNISYNEIVSLPSLPQ, ALKNLRATRNFLTELPAFSEGN, VVREYFFDRNQISHIPESILNL, and NECSIHISDNPLSSHALPALQRLT. Positions 243–250 are linker; the sequence is SDGQQNTL. The tract at residues 251–545 is E3 ubiquitin-protein ligase catalytic domain; the sequence is HRPLADAVTA…PENGSQLHHS (295 aa). One can recognise an NEL domain in the interval 253–545; the sequence is PLADAVTAWF…PENGSQLHHS (293 aa). Catalysis depends on C337, which acts as the Glycyl thioester intermediate.

It belongs to the LRR-containing bacterial E3 ligase family. As to quaternary structure, also interacts with human and mouse U2AF1 (U2AF35). Autoubiquitinated (in vitro). Ubiquitinated in the presence of host E1 ubiquitin-activating enzyme, E2 ubiquitin-conjugating enzyme and ubiquitin.

Its subcellular location is the secreted. It is found in the host cytoplasm. It localises to the host nucleus. The catalysed reaction is S-ubiquitinyl-[E2 ubiquitin-conjugating enzyme]-L-cysteine + [acceptor protein]-L-lysine = [E2 ubiquitin-conjugating enzyme]-L-cysteine + N(6)-ubiquitinyl-[acceptor protein]-L-lysine.. Its pathway is protein modification; protein ubiquitination. With respect to regulation, exists in an autoinhibited state in the absence of substrate protein, due to interactions of the leucine-rich repeats with NEL domain. Is activated upon binding to a substrate protein. Effector E3 ubiquitin ligase that interferes with host's ubiquitination pathway and modulates the acute inflammatory responses, thus facilitating bacterial colonization within the host cell. Interacts with IKBKG (NEMO) and TNIP1 (ABIN-1), a ubiquitin-binding adapter protein, which results in TNIP1-dependent 'Lys-27'-linked polyubiquitination of IKBKG. Consequently, polyubiquitinated IKBKG undergoes proteasome-dependent degradation, which perturbs NF-kappa-B activation during bacterial infection. Mediates polyubiquitination of host U2AF1, leading to its proteasomal degradation. Catalyzes 'Lys-48'-linked polyubiquitination and subsequent degradation of a subset of host guanylate-binding proteins (GBP1, GBP2, GBP4 and GBP6), thereby suppressing host cell defense. In contrast, host GBP3 and GBP7 are not ubiquitinated by IpaH9.8. Uses UBE2D2 (UBCH5B) as an E2 ubiquitin-conjugating enzyme. This is E3 ubiquitin-protein ligase ipaH9.8 from Shigella flexneri.